We begin with the raw amino-acid sequence, 98 residues long: Alpha-elicitin hibernalin (98 aa).

3 disulfides stabilise this stretch: C3-C71, C27-C56, and C51-C95.

It localises to the secreted. Induces local and distal defense responses (incompatible hypersensitive reaction) in plants from the solanaceae and cruciferae families. Elicits leaf necrosis and causes the accumulation of pathogenesis-related proteins. Might interact with the lipidic molecules of the plasma membrane. In Phytophthora hibernalis, this protein is Alpha-elicitin hibernalin.